Here is a 417-residue protein sequence, read N- to C-terminus: NADH-quinone oxidoreductase subunit D (417 aa).

Belongs to the complex I 49 kDa subunit family. As to quaternary structure, NDH-1 is composed of 14 different subunits. Subunits NuoB, C, D, E, F, and G constitute the peripheral sector of the complex.

Its subcellular location is the cell inner membrane. It carries out the reaction a quinone + NADH + 5 H(+)(in) = a quinol + NAD(+) + 4 H(+)(out). Its function is as follows. NDH-1 shuttles electrons from NADH, via FMN and iron-sulfur (Fe-S) centers, to quinones in the respiratory chain. The immediate electron acceptor for the enzyme in this species is believed to be ubiquinone. Couples the redox reaction to proton translocation (for every two electrons transferred, four hydrogen ions are translocated across the cytoplasmic membrane), and thus conserves the redox energy in a proton gradient. This chain is NADH-quinone oxidoreductase subunit D, found in Burkholderia mallei (strain NCTC 10247).